A 323-amino-acid chain; its full sequence is Isoeugenol synthase 1 (323 aa).

NADP(+) contacts are provided by residues 14-17, 36-47, 88-90, 113-115, lysine 135, and 155-157; these read TGYL, VMPLKKNSDDSK, VPQ, SEF, and NSL. The active-site Proton donor/acceptor is the lysine 135.

The protein belongs to the NmrA-type oxidoreductase family. Expressed in flowers, especially in corolla and tubes of petals, probably in both epidermal and mesophyll cell layers.

The catalysed reaction is (E)-isoeugenol + acetate + NADP(+) = (E)-coniferyl acetate + NADPH. Its pathway is aromatic compound metabolism; phenylpropanoid biosynthesis. Its activity is regulated as follows. Inhibited by zinc and copper ions. Repressed by 4-bromo-cinnamyl acetate. In terms of biological role, involved in the biosynthesis of the floral volatile isoeugenol. Catalyzes the synthesis of the phenylpropene isoeugenol from coniferyl acetate. Phenylpropenes are the primary constituents of various essential plant oils. They are produced as antimicrobial and antianimal compounds, or as floral attractants of pollinators. Isoeugenol is a characteristic aromatic constituent of spices and a floral volatile compound. The sequence is that of Isoeugenol synthase 1 from Petunia hybrida (Petunia).